Consider the following 369-residue polypeptide: Cystathionine gamma-synthase (369 aa).

N6-(pyridoxal phosphate)lysine is present on K200.

Belongs to the trans-sulfuration enzymes family. Homotetramer. Pyridoxal 5'-phosphate is required as a cofactor.

The protein resides in the cytoplasm. The catalysed reaction is O-succinyl-L-homoserine + L-cysteine = L,L-cystathionine + succinate + H(+). Catalyzes the formation of L-cystathionine from O-succinyl-L-homoserine (OSHS) and L-cysteine, via a gamma-replacement reaction. In the absence of thiol, catalyzes gamma-elimination to form 2-oxobutanoate, succinate and ammonia. This Haemophilus influenzae (strain ATCC 51907 / DSM 11121 / KW20 / Rd) protein is Cystathionine gamma-synthase (metB).